Consider the following 374-residue polypeptide: Anhydro-N-acetylmuramic acid kinase (374 aa).

Position 12–19 (glycine 12–aspartate 19) interacts with ATP.

This sequence belongs to the anhydro-N-acetylmuramic acid kinase family.

It carries out the reaction 1,6-anhydro-N-acetyl-beta-muramate + ATP + H2O = N-acetyl-D-muramate 6-phosphate + ADP + H(+). Its pathway is amino-sugar metabolism; 1,6-anhydro-N-acetylmuramate degradation. The protein operates within cell wall biogenesis; peptidoglycan recycling. Catalyzes the specific phosphorylation of 1,6-anhydro-N-acetylmuramic acid (anhMurNAc) with the simultaneous cleavage of the 1,6-anhydro ring, generating MurNAc-6-P. Is required for the utilization of anhMurNAc either imported from the medium or derived from its own cell wall murein, and thus plays a role in cell wall recycling. This Enterobacter sp. (strain 638) protein is Anhydro-N-acetylmuramic acid kinase.